A 418-amino-acid polypeptide reads, in one-letter code: Ig-like V-type domain-containing protein FAM187A (418 aa).

Residues 1–18 form the signal peptide; sequence MRLAPTTVLLWAWGSLQA. Over 19-376 the chain is Extracellular; the sequence is FEIVEKENIF…ASLSDPETRT (358 aa). Residues 267 to 361 enclose the Ig-like V-type domain; that stretch reads PWVPQVPIQF…IAGFRLGVTS (95 aa). Cys289 and Cys345 form a disulfide bridge. Asn317 is a glycosylation site (N-linked (GlcNAc...) asparagine). Residues 377 to 397 traverse the membrane as a helical segment; it reads AVELTLIGYLLIAVVFVTIHL. The Cytoplasmic portion of the chain corresponds to 398-418; it reads CRCCCQSRCCPNFSAQTLLQL.

It belongs to the FAM187 family.

It localises to the membrane. In Rattus norvegicus (Rat), this protein is Ig-like V-type domain-containing protein FAM187A (Fam187a).